The chain runs to 209 residues: Ribosome maturation factor RimM (209 aa).

Positions 1 to 28 (MARRPQRPAPSGRAGAGRGAAGAAPPGP) are disordered. A PRC barrel domain is found at 123 to 197 (EDEFFTADLV…RVTIAPPEDL (75 aa)).

This sequence belongs to the RimM family. In terms of assembly, binds ribosomal protein uS19.

The protein resides in the cytoplasm. An accessory protein needed during the final step in the assembly of 30S ribosomal subunit, possibly for assembly of the head region. Essential for efficient processing of 16S rRNA. May be needed both before and after RbfA during the maturation of 16S rRNA. It has affinity for free ribosomal 30S subunits but not for 70S ribosomes. This chain is Ribosome maturation factor RimM, found in Methylobacterium sp. (strain 4-46).